The primary structure comprises 331 residues: D/L-glyceraldehyde reductase (331 aa).

The active-site Proton donor is Tyr51. His114 contacts substrate. NADP(+) is bound at residue 213–276; sequence SAFGNNTKGL…SVTKARIAEN (64 aa).

The protein belongs to the aldo/keto reductase family.

It catalyses the reaction glycerol + NADP(+) = L-glyceraldehyde + NADPH + H(+). The catalysed reaction is glycerol + NADP(+) = D-glyceraldehyde + NADPH + H(+). It functions in the pathway carbohydrate acid metabolism. Functionally, mediates the conversion of L-glyceraldehyde to glycerol in D-galacturonate catabolic process. Also able to reduce D-glyceraldehyde. The chain is D/L-glyceraldehyde reductase (gld1) from Hypocrea jecorina (Trichoderma reesei).